Consider the following 255-residue polypeptide: tRNA (guanine-N(7)-)-methyltransferase (255 aa).

Residues glutamate 64, glutamate 89, aspartate 116, and aspartate 138 each coordinate S-adenosyl-L-methionine. Aspartate 138 is an active-site residue. Residues lysine 142, aspartate 174, and 212–215 (TRYE) each bind substrate.

It belongs to the class I-like SAM-binding methyltransferase superfamily. TrmB family.

It catalyses the reaction guanosine(46) in tRNA + S-adenosyl-L-methionine = N(7)-methylguanosine(46) in tRNA + S-adenosyl-L-homocysteine. It participates in tRNA modification; N(7)-methylguanine-tRNA biosynthesis. Its function is as follows. Catalyzes the formation of N(7)-methylguanine at position 46 (m7G46) in tRNA. This chain is tRNA (guanine-N(7)-)-methyltransferase, found in Rhodospirillum rubrum (strain ATCC 11170 / ATH 1.1.1 / DSM 467 / LMG 4362 / NCIMB 8255 / S1).